The sequence spans 376 residues: MKIPAALVFIPVGVLFLISGLIVNIIQLVFFIIVRPFSRSLYRRINKNVAELLWLQLIWLFDWWACIKINLYVDAETLELIGKEHALVLSNHRSDIDWLIGWVMAQRVGCLGSSLAIMKKEAKYLPIIGWSMWFSDYIFLERSWAKDENTLKAGFKRLEDFPMTFWLALFVEGTRFTQEKLEAAQEYASIRSLPSPRNVLIPRTKGFVSAVSEIRSFVPAIYDCTLTVHNNQPTPTLLRMFSGQSSEINLQMRRHKMSELPETDDGIAQWCQDLFITKDAQLEKYFTKDVFSDLEVHQINRPIKPLIVVIIWLGFLVFGGFKLLQWLSIVASWKIILLFVFFLVIATITMQILIQSSESQRSTPAKRPLQEQLISA.

2 helical membrane passes run 14-34 (VLFL…FIIV) and 49-69 (VAEL…CIKI). The short motif at 92–97 (HRSDID) is the HXXXXD motif element. The next 3 membrane-spanning stretches (helical) occupy residues 98-118 (WLIG…LAIM), 306-326 (LIVV…LLQW), and 335-355 (IILL…ILIQ).

It belongs to the 1-acyl-sn-glycerol-3-phosphate acyltransferase family. In terms of tissue distribution, predominantly expressed in pollen.

The protein resides in the membrane. The catalysed reaction is a 1-acyl-sn-glycero-3-phosphate + an acyl-CoA = a 1,2-diacyl-sn-glycero-3-phosphate + CoA. It participates in phospholipid metabolism; CDP-diacylglycerol biosynthesis; CDP-diacylglycerol from sn-glycerol 3-phosphate: step 2/3. Functionally, converts lysophosphatidic acid (LPA) into phosphatidic acid by incorporating acyl moiety at the 2 position. Has preference for C-18-CoA substrates compared to C-16-CoA substrates. The polypeptide is 1-acyl-sn-glycerol-3-phosphate acyltransferase 3 (LPAT3) (Arabidopsis thaliana (Mouse-ear cress)).